A 335-amino-acid polypeptide reads, in one-letter code: Cytoskeleton protein RodZ (335 aa).

Residues 1–111 (MNTEATHDQN…LGKRRKKRDG (111 aa)) lie on the Cytoplasmic side of the membrane. The 53-residue stretch at 19–71 (LRNAREQLGLSQQAVAERLCLKVSTVRDIEEDKAPADLASTFLRGYIRSYARL) folds into the HTH cro/C1-type domain. Positions 30–49 (QQAVAERLCLKVSTVRDIEE) form a DNA-binding region, H-T-H motif. Residues 112 to 132 (WLMTFTWLVLFVVIGLSGAWW) traverse the membrane as a helical; Signal-anchor for type II membrane protein segment. The Periplasmic portion of the chain corresponds to 133–335 (WQDHKAQQEE…TLNAEQSPAQ (203 aa)). Residues 148 to 164 (DQSSAELNNNQSQSVPL) show a composition bias toward polar residues. Residues 148-239 (DQSSAELNNN…PDGAAPLPTD (92 aa)) form a disordered region. Composition is skewed to low complexity over residues 165–205 (DTST…DPQQ) and 217–239 (DTAA…LPTD).

It belongs to the RodZ family.

Its subcellular location is the cell inner membrane. In terms of biological role, cytoskeletal protein that is involved in cell-shape control through regulation of the length of the long axis. This chain is Cytoskeleton protein RodZ, found in Escherichia coli O6:K15:H31 (strain 536 / UPEC).